The sequence spans 383 residues: tRNA (guanine(26)-N(2))-dimethyltransferase (383 aa).

The Trm1 methyltransferase domain occupies 4 to 371; sequence EIITEGRTPL…ASPEEFEAVL (368 aa). The S-adenosyl-L-methionine site is built by arginine 38, arginine 63, aspartate 80, aspartate 108, and alanine 109. The Zn(2+) site is built by cysteine 243, cysteine 246, cysteine 258, and cysteine 261.

This sequence belongs to the class I-like SAM-binding methyltransferase superfamily. Trm1 family.

It catalyses the reaction guanosine(26) in tRNA + 2 S-adenosyl-L-methionine = N(2)-dimethylguanosine(26) in tRNA + 2 S-adenosyl-L-homocysteine + 2 H(+). Its function is as follows. Dimethylates a single guanine residue at position 26 of a number of tRNAs using S-adenosyl-L-methionine as donor of the methyl groups. The polypeptide is tRNA (guanine(26)-N(2))-dimethyltransferase (Methanopyrus kandleri (strain AV19 / DSM 6324 / JCM 9639 / NBRC 100938)).